Reading from the N-terminus, the 209-residue chain is RNA chaperone ProQ (209 aa).

The disordered stretch occupies residues 105 to 148 (ESQDKAKAKRAALAPKPAAKKAPKKVAVPQRAKTERPAKPAPKA).

Belongs to the ProQ family.

The protein localises to the cytoplasm. Functionally, RNA chaperone with significant RNA binding, RNA strand exchange and RNA duplexing activities. The chain is RNA chaperone ProQ from Shewanella baltica (strain OS223).